The sequence spans 28 residues: Small integral membrane protein 47 (28 aa).

A helical membrane pass occupies residues valine 7 to asparagine 24.

It localises to the membrane. The chain is Small integral membrane protein 47 from Homo sapiens (Human).